The primary structure comprises 274 residues: Dermonecrotic toxin SdSicTox-betaIIB1aii (274 aa).

Histidine 5 is a catalytic residue. The Mg(2+) site is built by glutamate 25 and aspartate 27. Histidine 41 serves as the catalytic Nucleophile. Intrachain disulfides connect cysteine 45–cysteine 51 and cysteine 47–cysteine 190. Aspartate 85 provides a ligand contact to Mg(2+).

The protein belongs to the arthropod phospholipase D family. Class II subfamily. It depends on Mg(2+) as a cofactor. Expressed by the venom gland.

It localises to the secreted. It catalyses the reaction an N-(acyl)-sphingosylphosphocholine = an N-(acyl)-sphingosyl-1,3-cyclic phosphate + choline. The enzyme catalyses an N-(acyl)-sphingosylphosphoethanolamine = an N-(acyl)-sphingosyl-1,3-cyclic phosphate + ethanolamine. The catalysed reaction is a 1-acyl-sn-glycero-3-phosphocholine = a 1-acyl-sn-glycero-2,3-cyclic phosphate + choline. It carries out the reaction a 1-acyl-sn-glycero-3-phosphoethanolamine = a 1-acyl-sn-glycero-2,3-cyclic phosphate + ethanolamine. In terms of biological role, dermonecrotic toxins cleave the phosphodiester linkage between the phosphate and headgroup of certain phospholipids (sphingolipid and lysolipid substrates), forming an alcohol (often choline) and a cyclic phosphate. This toxin acts on sphingomyelin (SM). It may also act on ceramide phosphoethanolamine (CPE), lysophosphatidylcholine (LPC) and lysophosphatidylethanolamine (LPE), but not on lysophosphatidylserine (LPS), and lysophosphatidylglycerol (LPG). It acts by transphosphatidylation, releasing exclusively cyclic phosphate products as second products. Induces dermonecrosis, hemolysis, increased vascular permeability, edema, inflammatory response, and platelet aggregation. This Sicarius cf. damarensis (strain GJB-2008) (Six-eyed sand spider) protein is Dermonecrotic toxin SdSicTox-betaIIB1aii.